Consider the following 237-residue polypeptide: Ribose-5-phosphate isomerase A (237 aa).

Substrate contacts are provided by residues 29-32, 86-89, and 99-102; these read SGST, DGAD, and KGGG. Glu108 functions as the Proton acceptor in the catalytic mechanism. Lys126 contributes to the substrate binding site.

The protein belongs to the ribose 5-phosphate isomerase family. In terms of assembly, homodimer.

The enzyme catalyses aldehydo-D-ribose 5-phosphate = D-ribulose 5-phosphate. It participates in carbohydrate degradation; pentose phosphate pathway; D-ribose 5-phosphate from D-ribulose 5-phosphate (non-oxidative stage): step 1/1. In terms of biological role, catalyzes the reversible conversion of ribose-5-phosphate to ribulose 5-phosphate. This chain is Ribose-5-phosphate isomerase A, found in Prochlorococcus marinus (strain MIT 9312).